A 447-amino-acid polypeptide reads, in one-letter code: Phosphoglucosamine mutase (447 aa).

The active-site Phosphoserine intermediate is the Ser-88. Ser-88, Asp-231, Asp-233, and Asp-235 together coordinate Mg(2+). A Phosphoserine modification is found at Ser-88.

Belongs to the phosphohexose mutase family. The cofactor is Mg(2+). Post-translationally, activated by phosphorylation.

The enzyme catalyses alpha-D-glucosamine 1-phosphate = D-glucosamine 6-phosphate. Functionally, catalyzes the conversion of glucosamine-6-phosphate to glucosamine-1-phosphate. The chain is Phosphoglucosamine mutase from Methanococcus maripaludis (strain C7 / ATCC BAA-1331).